We begin with the raw amino-acid sequence, 338 residues long: Fructose-1,6-bisphosphatase class 1 (338 aa).

Glutamate 94, aspartate 116, leucine 118, and aspartate 119 together coordinate Mg(2+). Substrate contacts are provided by residues 119 to 122, asparagine 210, and lysine 276; that span reads DGSS. Position 282 (glutamate 282) interacts with Mg(2+).

Belongs to the FBPase class 1 family. In terms of assembly, homotetramer. The cofactor is Mg(2+).

The protein localises to the cytoplasm. The enzyme catalyses beta-D-fructose 1,6-bisphosphate + H2O = beta-D-fructose 6-phosphate + phosphate. The protein operates within carbohydrate biosynthesis; gluconeogenesis. In Burkholderia mallei (strain NCTC 10247), this protein is Fructose-1,6-bisphosphatase class 1.